Consider the following 316-residue polypeptide: Fe-S cluster assembly protein DRE2 (316 aa).

Residues 4 to 156 form an N-terminal SAM-like domain region; sequence SMPVATTVAA…KPQHVASTSV (153 aa). The linker stretch occupies residues 157–202; it reads PLKSRQPGALLNRKKTDPAKKQALWALSSPSTPKIDPEALLTAEDK. Residues Cys209, Cys223, Cys226, and Cys228 each coordinate [2Fe-2S] cluster. Residues 209-228 form a fe-S binding site A region; that stretch reads CEPVRSSAPRRKKACKSCSC. The [4Fe-4S] cluster site is built by Cys279, Cys282, Cys290, and Cys293. 2 consecutive short sequence motifs (cx2C motif) follow at residues 279–282 and 290–293; these read CGSC and CAGC. Residues 279-293 are fe-S binding site B; sequence CGSCFLGDAFRCAGC.

This sequence belongs to the anamorsin family. As to quaternary structure, monomer. Interacts with TAH18. Interacts with MIA40. [2Fe-2S] cluster serves as cofactor. It depends on [4Fe-4S] cluster as a cofactor.

The protein resides in the cytoplasm. The protein localises to the mitochondrion intermembrane space. Component of the cytosolic iron-sulfur (Fe-S) protein assembly (CIA) machinery required for the maturation of extramitochondrial Fe-S proteins. Part of an electron transfer chain functioning in an early step of cytosolic Fe-S biogenesis, facilitating the de novo assembly of a [4Fe-4S] cluster on the scaffold complex CFD1-NBP35. Electrons are transferred to DRE2 from NADPH via the FAD- and FMN-containing protein TAH18. TAH18-DRE2 are also required for the assembly of the diferric tyrosyl radical cofactor of ribonucleotide reductase (RNR), probably by providing electrons for reduction during radical cofactor maturation in the catalytic small subunit RNR2. This chain is Fe-S cluster assembly protein DRE2, found in Laccaria bicolor (strain S238N-H82 / ATCC MYA-4686) (Bicoloured deceiver).